A 246-amino-acid chain; its full sequence is Neurotrophic factor BDNF precursor form (246 aa).

The first 18 residues, 1-18 (MTILFLTMVISYFSCMKA), serve as a signal peptide directing secretion. The propeptide occupies 19–127 (APMKEASVRG…AANMSMRVRR (109 aa)). The N-linked (GlcNAc...) asparagine glycan is linked to N120. Disulfide bonds link C140–C207, C185–C236, and C195–C238.

Belongs to the NGF-beta family.

It is found in the secreted. In terms of biological role, important signaling molecule that activates signaling cascades downstream of NTRK2. During development, promotes the survival and differentiation of selected neuronal populations of the peripheral and central nervous systems. Participates in axonal growth, pathfinding and in the modulation of dendritic growth and morphology. Major regulator of synaptic transmission and plasticity at adult synapses in many regions of the CNS. The versatility of BDNF is emphasized by its contribution to a range of adaptive neuronal responses including long-term potentiation (LTP), long-term depression (LTD), certain forms of short-term synaptic plasticity, as well as homeostatic regulation of intrinsic neuronal excitability. The sequence is that of Neurotrophic factor BDNF precursor form (BDNF) from Gallus gallus (Chicken).